Here is a 96-residue protein sequence, read N- to C-terminus: Co-chaperonin GroES (96 aa).

It belongs to the GroES chaperonin family. As to quaternary structure, heptamer of 7 subunits arranged in a ring. Interacts with the chaperonin GroEL.

The protein resides in the cytoplasm. In terms of biological role, together with the chaperonin GroEL, plays an essential role in assisting protein folding. The GroEL-GroES system forms a nano-cage that allows encapsulation of the non-native substrate proteins and provides a physical environment optimized to promote and accelerate protein folding. GroES binds to the apical surface of the GroEL ring, thereby capping the opening of the GroEL channel. This chain is Co-chaperonin GroES, found in Coxiella burnetii (strain Dugway 5J108-111).